A 368-amino-acid polypeptide reads, in one-letter code: GTPase Obg (368 aa).

In terms of domain architecture, Obg spans 1-161 (MRFVDEATIT…RSLRLELKIL (161 aa)). The OBG-type G domain maps to 162–337 (ADAGLLGLPN…VVAEMWRMRD (176 aa)). GTP is bound by residues 168–175 (GLPNAGKS), 193–197 (FTTLI), 217–220 (DIPG), 290–293 (NKID), and 318–320 (SAL). 2 residues coordinate Mg(2+): Ser-175 and Thr-195.

This sequence belongs to the TRAFAC class OBG-HflX-like GTPase superfamily. OBG GTPase family. In terms of assembly, monomer. It depends on Mg(2+) as a cofactor.

Its subcellular location is the cytoplasm. In terms of biological role, an essential GTPase which binds GTP, GDP and possibly (p)ppGpp with moderate affinity, with high nucleotide exchange rates and a fairly low GTP hydrolysis rate. Plays a role in control of the cell cycle, stress response, ribosome biogenesis and in those bacteria that undergo differentiation, in morphogenesis control. The polypeptide is GTPase Obg (Nitratidesulfovibrio vulgaris (strain DSM 19637 / Miyazaki F) (Desulfovibrio vulgaris)).